The following is a 243-amino-acid chain: MTGIAAASFFSNTCRFGGCGLHFPTLADLIEHIEDNHIDTDPRVLEKQELQQPTYVALSYINRFMTDAARREQESLKKKIQPKLSLTLSSSVSRGNVSTPPRHSSGSLTPPVTPPITPSSSFRSSTPTGSEYDEEEVDYEESDSDESWTTESAISSEAILSSMCMNGGEEKPFACPVPGCKKRYKNVNGIKYHAKNGHRTQIRVRKPFKCRCGKSYKTAQGLRHHTINFHPPVSAEIIRKMQQ.

Residues 12–37 (NTCRFGGCGLHFPTLADLIEHIEDNH) form a C2H2-type 1 zinc finger. The segment at 39-79 (DTDPRVLEKQELQQPTYVALSYINRFMTDAARREQESLKKK) is required for interaction with NR2C2. Residues 89–108 (SSSVSRGNVSTPPRHSSGSL) show a composition bias toward polar residues. Residues 89–151 (SSSVSRGNVS…SDSDESWTTE (63 aa)) form a disordered region. T109 and T113 each carry phosphothreonine. A compositionally biased stretch (low complexity) spans 118-130 (PSSSFRSSTPTGS). Acidic residues predominate over residues 131–148 (EYDEEEVDYEESDSDESW). A C2H2-type 2 zinc finger spans residues 173–198 (FACPVPGCKKRYKNVNGIKYHAKNGH). Residues 208–230 (FKCRCGKSYKTAQGLRHHTINFH) form a C2H2-type 3; degenerate zinc finger.

As to quaternary structure, interacts with NR2C2 (via ligand-binding region). As to expression, highest expression in testis with moderate levels in colon, placenta, prostate and ovary and low levels in brain, spleen, liver and small intestine.

Its subcellular location is the nucleus. Acts as a transcriptional corepressor of orphan nuclear receptor NR2C2. Inhibits expression of the gluconeogenesis enzyme PCK2 through inhibition of NR2C2 activity. Also involved in transcriptional activation of NAMPT by promoting expression of PPARA and PPARD. Plays a role in lipid metabolism by suppressing lipogenesis, increasing lipolysis and decreasing lipid accumulation in adipose tissue. Plays a role in glucose homeostasis by improving glucose metabolism and insulin sensitivity. This chain is Juxtaposed with another zinc finger protein 1, found in Homo sapiens (Human).